A 366-amino-acid polypeptide reads, in one-letter code: MMKASRSDTFMLRTWIQLLVLFVIMFIMSAILPIAASVEGLGFPCYFPNLVDYSLLNLTLRNAAKHLTPTLFLEAPELFVYITWSVLVDLASAIYYVVGALAILQARKTHLTSMITLQTWINLVGSHTMLFIGIARMWTLQLFIHVLSYKHVMLAAFIYFLHFCLSYMHTLSLVSRNSPKWSVLLMEQHIPKQSLLSTILDYGKPLCVNMYLSLLALEMLVFSLGFMMAIGNSFYILVSDTVLASINLYFVLTTFWYMMTEMFLQDYLKLQFGFYLGVFSGSLILLLPVLRYEAVFVSANLHKTVAVNIAMIPAMCVIAMMFRLFRYSQQVRKPENSYTPLPKRFKKRRQKQDQQLIMVETSDEEL.

The Intravirion segment spans residues 1 to 17; sequence MMKASRSDTFMLRTWIQ. Residues 18–38 form a helical membrane-spanning segment; sequence LLVLFVIMFIMSAILPIAASV. At 39 to 83 the chain is on the virion surface side; the sequence is EGLGFPCYFPNLVDYSLLNLTLRNAAKHLTPTLFLEAPELFVYIT. The chain crosses the membrane as a helical span at residues 84-104; that stretch reads WSVLVDLASAIYYVVGALAIL. The Intravirion portion of the chain corresponds to 105 to 113; the sequence is QARKTHLTS. A helical transmembrane segment spans residues 114-134; it reads MITLQTWINLVGSHTMLFIGI. Residues 135 to 153 lie on the Virion surface side of the membrane; the sequence is ARMWTLQLFIHVLSYKHVM. Residues 154-174 traverse the membrane as a helical segment; the sequence is LAAFIYFLHFCLSYMHTLSLV. The Intravirion portion of the chain corresponds to 175-209; it reads SRNSPKWSVLLMEQHIPKQSLLSTILDYGKPLCVN. The chain crosses the membrane as a helical span at residues 210-230; the sequence is MYLSLLALEMLVFSLGFMMAI. The Virion surface portion of the chain corresponds to 231–235; the sequence is GNSFY. Residues 236 to 256 form a helical membrane-spanning segment; that stretch reads ILVSDTVLASINLYFVLTTFW. Topologically, residues 257–269 are intravirion; the sequence is YMMTEMFLQDYLK. The helical transmembrane segment at 270 to 290 threads the bilayer; sequence LQFGFYLGVFSGSLILLLPVL. At 291 to 304 the chain is on the virion surface side; the sequence is RYEAVFVSANLHKT. A helical transmembrane segment spans residues 305 to 325; sequence VAVNIAMIPAMCVIAMMFRLF. Over 326-366 the chain is Intravirion; the sequence is RYSQQVRKPENSYTPLPKRFKKRRQKQDQQLIMVETSDEEL.

This sequence belongs to the herpesviridae glycoprotein M family. As to quaternary structure, interacts (via N-terminus) with gN (via N-terminus). The gM-gN heterodimer forms the gCII complex.

Its subcellular location is the virion membrane. It is found in the host Golgi apparatus. The protein localises to the host trans-Golgi network. It localises to the host endosome membrane. The protein resides in the host nucleus inner membrane. In terms of biological role, envelope glycoprotein important for virion assembly and egress. Plays a role in the correct incorporation of gH-gL into virion membrane. Directs the glycoprotein N (gN) to the host trans-Golgi network. This chain is Envelope glycoprotein M, found in Saimiri sciureus (Common squirrel monkey).